The sequence spans 360 residues: tRNA/tmRNA (uracil-C(5))-methyltransferase (360 aa).

5 residues coordinate S-adenosyl-L-methionine: Q185, Y213, N218, E234, and D294. C319 (nucleophile) is an active-site residue. The active-site Proton acceptor is E353.

It belongs to the class I-like SAM-binding methyltransferase superfamily. RNA M5U methyltransferase family. TrmA subfamily.

It catalyses the reaction uridine(54) in tRNA + S-adenosyl-L-methionine = 5-methyluridine(54) in tRNA + S-adenosyl-L-homocysteine + H(+). It carries out the reaction uridine(341) in tmRNA + S-adenosyl-L-methionine = 5-methyluridine(341) in tmRNA + S-adenosyl-L-homocysteine + H(+). In terms of biological role, dual-specificity methyltransferase that catalyzes the formation of 5-methyluridine at position 54 (m5U54) in all tRNAs, and that of position 341 (m5U341) in tmRNA (transfer-mRNA). The polypeptide is tRNA/tmRNA (uracil-C(5))-methyltransferase (Nitratiruptor sp. (strain SB155-2)).